Reading from the N-terminus, the 20-residue chain is Ranalexin-1Ca (20 aa).

Cysteines 14 and 20 form a disulfide.

In terms of tissue distribution, expressed by the skin glands.

The protein localises to the secreted. Its function is as follows. Antibacterial activity against Gram-positive bacterium S.aureus (MIC=17 uM) and Gram-negative bacterium E.coli (MIC=4 uM). Has activity against C.albicans (MIC=14 uM). This is Ranalexin-1Ca from Lithobates clamitans (Green frog).